The chain runs to 208 residues: ER membrane protein complex subunit 8/9 homolog (208 aa).

The 136-residue stretch at 11–146 (YEISQNAYIK…ERSPVMQLCV (136 aa)) folds into the MPN domain.

Belongs to the EMC8/EMC9 family.

The protein is ER membrane protein complex subunit 8/9 homolog (EMB2731) of Arabidopsis thaliana (Mouse-ear cress).